A 433-amino-acid chain; its full sequence is Tol-Pal system protein TolB (433 aa).

Positions 1-21 are cleaved as a signal peptide; that stretch reads MINLFRGLLVVLCFASAMVSA.

Belongs to the TolB family. As to quaternary structure, the Tol-Pal system is composed of five core proteins: the inner membrane proteins TolA, TolQ and TolR, the periplasmic protein TolB and the outer membrane protein Pal. They form a network linking the inner and outer membranes and the peptidoglycan layer.

The protein localises to the periplasm. Its function is as follows. Part of the Tol-Pal system, which plays a role in outer membrane invagination during cell division and is important for maintaining outer membrane integrity. The sequence is that of Tol-Pal system protein TolB from Pseudomonas syringae pv. syringae (strain B728a).